The sequence spans 153 residues: Natriuretic peptides A (153 aa).

The signal sequence occupies residues 1-25 (MGSFSTIMASFLLFLAFQLQGQTRA). 2 propeptides span residues 26–123 (NPVY…AAPR) and 93–103 (DGGALGRGSWD). The tract at residues 54–105 (EDEVMPPQVLSDQSEEERAALSPLPEVPPWTGEVNPAQRDGGALGRGSWDSS) is disordered. Ser129 bears the Phosphoserine mark. Cys130 and Cys146 are joined by a disulfide. Residues 147 to 151 (NSFRY) are important for degradation of atrial natriuretic peptide by IDE.

Belongs to the natriuretic peptide family. Homodimer; disulfide-linked antiparallel dimer. Post-translationally, the precursor molecule is proteolytically cleaved by CORIN at Arg-123 to produce the atrial natriuretic peptide. Undergoes further proteolytic cleavage by unknown proteases to give rise to long-acting natriuretic peptide, vessel dilator and kaliuretic peptide. Additional processing gives rise to the auriculin and atriopeptin peptides. In the kidneys, alternative processing by an unknown protease results in the peptide urodilatin. Cleavage by MME initiates degradation of the factor and thereby regulates its activity. Degradation by IDE results in reduced activation of NPR1 (in vitro). During IDE degradation, the resulting products can temporarily stimulate NPR2 to produce cGMP, before the fragments are completely degraded and inactivated by IDE (in vitro). In terms of processing, degraded by IDE. Post-translationally, phosphorylation on Ser-129 decreases vasorelaxant activity.

It is found in the secreted. The protein localises to the perikaryon. Its subcellular location is the cell projection. Its function is as follows. Hormone that plays a key role in mediating cardio-renal homeostasis, and is involved in vascular remodeling and regulating energy metabolism. Acts by specifically binding and stimulating NPR1 to produce cGMP, which in turn activates effector proteins, such as PRKG1, that drive various biological responses. Regulates vasodilation, natriuresis, diuresis and aldosterone synthesis and is therefore essential for regulating blood pressure, controlling the extracellular fluid volume and maintaining the fluid-electrolyte balance. Also involved in inhibiting cardiac remodeling and cardiac hypertrophy by inducing cardiomyocyte apoptosis and attenuating the growth of cardiomyocytes and fibroblasts. Plays a role in female pregnancy by promoting trophoblast invasion and spiral artery remodeling in uterus, and thus prevents pregnancy-induced hypertension. In adipose tissue, acts in various cGMP- and PKG-dependent pathways to regulate lipid metabolism and energy homeostasis. This includes up-regulating lipid metabolism and mitochondrial oxygen utilization by activating the AMP-activated protein kinase (AMPK), and increasing energy expenditure by acting via MAPK11 to promote the UCP1-dependent thermogenesis of brown adipose tissue. Binds the clearance receptor NPR3 which removes the hormone from circulation. Functionally, may have a role in cardio-renal homeostasis through regulation of natriuresis, diuresis, vasodilation, and inhibiting aldosterone synthesis. In vitro, promotes the production of cGMP and induces vasodilation. May promote natriuresis, at least in part, by enhancing prostaglandin E2 synthesis resulting in the inhibition of renal Na+-K+-ATPase. However reports on the involvement of this peptide in mammal blood volume and blood pressure homeostasis are conflicting; according to a report, in vivo it is not sufficient to activate cGMP and does not inhibit collecting duct transport nor effect diuresis and natriuresis. Appears to bind to specific receptors that are distinct from the receptors bound by atrial natriuretic peptide and vessel dilator. Possibly enhances protein excretion in urine by decreasing proximal tubular protein reabsorption. In terms of biological role, may have a role in cardio-renal homeostasis through regulation of natriuresis, diuresis, and vasodilation. In vitro, promotes the production of cGMP and induces vasodilation. May promote natriuresis, at least in part, by enhancing prostaglandin E2 synthesis resulting in the inhibition of renal Na+-K+-ATPase. However reports on the involvement of this peptide in mammal blood volume and blood pressure homeostasis are conflicting; according to a report it is not sufficient to activate cGMP and does not inhibit collecting duct transport nor effect diuresis and natriuresis. Appears to bind to specific receptors that are distinct from the receptors bound by the atrial natriuretic and long-acting natriuretic peptides. Possibly functions in protein excretion in urine by maintaining the integrity of the proximal tubules and enhancing protein excretion by decreasing proximal tubular protein reabsorption. May have a role in cardio-renal homeostasis through regulation of diuresis and inhibiting aldosterone synthesis. In vitro, promotes the production of cGMP and induces vasodilation. May promote natriuresis, at least in part, by enhancing prostaglandin E2 synthesis resulting in the inhibition of renal Na+-K+-ATPase. May have a role in potassium excretion but not sodium excretion (natriuresis). Possibly enhances protein excretion in urine by decreasing proximal tubular protein reabsorption. Its function is as follows. Hormone produced in the kidneys that appears to be important for maintaining cardio-renal homeostasis. Mediates vasodilation, natriuresis and diuresis primarily in the renal system, in order to maintain the extracellular fluid volume and control the fluid-electrolyte balance. Specifically binds and stimulates cGMP production by renal transmembrane receptors, likely NPR1. Urodilatin not ANP, may be the natriuretic peptide responsible for the regulation of sodium and water homeostasis in the kidney. Functionally, may have a role in cardio-renal homeostasis through regulation of natriuresis and vasodilation. In vivo promotes natriuresis and in vitro, vasodilates renal artery strips. In terms of biological role, may have a role in cardio-renal homeostasis through regulation of regulation of natriuresis and vasodilation. In vivo promotes natriuresis. In vitro, vasodilates intestinal smooth muscle but not smooth muscle strips. May have a role in cardio-renal homeostasis through regulation of natriuresis and vasodilation. In vivo promotes natriuresis. In vitro, selectively vasodilates intestinal and vascular smooth muscle strips. Its function is as follows. May have a role in cardio-renal homeostasis through regulation of natriuresis and vasodilation. In vivo promotes natriuresis. In vitro, selectively vasodilates intestinal smooth muscle but not vascular smooth muscle strips. This is Natriuretic peptides A (NPPA) from Equus caballus (Horse).